Here is a 914-residue protein sequence, read N- to C-terminus: Protein GAMETE EXPRESSED 2 (914 aa).

Filamin repeat units follow at residues 249 to 382 (IGYC…IKEV) and 391 to 485 (ACSV…DVNV). Residues 893–913 (LVVVPFSFFSIKLFSLLMVLI) traverse the membrane as a helical segment.

In tricellular pollen, expressed in mature sperm cells but not in the vegetative cell. In bicellular pollen, detected in the progenitor generative cell. Detected in the egg cell within the female gametophyte.

The protein localises to the cell membrane. The polypeptide is Protein GAMETE EXPRESSED 2 (GEX2) (Arabidopsis thaliana (Mouse-ear cress)).